We begin with the raw amino-acid sequence, 210 residues long: Thymidylate kinase (210 aa).

ATP is bound at residue 16–23 (GGDGVGKS).

Belongs to the thymidylate kinase family.

The enzyme catalyses dTMP + ATP = dTDP + ADP. Functionally, phosphorylation of dTMP to form dTDP in both de novo and salvage pathways of dTTP synthesis. This chain is Thymidylate kinase, found in Leifsonia xyli subsp. xyli (strain CTCB07).